The chain runs to 331 residues: Probable allantoicase (331 aa).

Belongs to the allantoicase family.

It catalyses the reaction allantoate + H2O = (S)-ureidoglycolate + urea. Its pathway is nitrogen metabolism; (S)-allantoin degradation; (S)-ureidoglycolate from allantoate (aminidohydrolase route): step 1/1. The sequence is that of Probable allantoicase from Pseudomonas savastanoi pv. phaseolicola (strain 1448A / Race 6) (Pseudomonas syringae pv. phaseolicola (strain 1448A / Race 6)).